The following is a 93-amino-acid chain: DNA-directed RNA polymerase subunit omega (93 aa).

This sequence belongs to the RNA polymerase subunit omega family. In terms of assembly, the RNAP catalytic core consists of 2 alpha, 1 beta, 1 beta' and 1 omega subunit. When a sigma factor is associated with the core the holoenzyme is formed, which can initiate transcription.

The catalysed reaction is RNA(n) + a ribonucleoside 5'-triphosphate = RNA(n+1) + diphosphate. Functionally, promotes RNA polymerase assembly. Latches the N- and C-terminal regions of the beta' subunit thereby facilitating its interaction with the beta and alpha subunits. This is DNA-directed RNA polymerase subunit omega from Shewanella loihica (strain ATCC BAA-1088 / PV-4).